The following is a 253-amino-acid chain: 3-deoxy-manno-octulosonate cytidylyltransferase (253 aa).

Belongs to the KdsB family.

The protein localises to the cytoplasm. It catalyses the reaction 3-deoxy-alpha-D-manno-oct-2-ulosonate + CTP = CMP-3-deoxy-beta-D-manno-octulosonate + diphosphate. The protein operates within nucleotide-sugar biosynthesis; CMP-3-deoxy-D-manno-octulosonate biosynthesis; CMP-3-deoxy-D-manno-octulosonate from 3-deoxy-D-manno-octulosonate and CTP: step 1/1. It participates in bacterial outer membrane biogenesis; lipopolysaccharide biosynthesis. Functionally, activates KDO (a required 8-carbon sugar) for incorporation into bacterial lipopolysaccharide in Gram-negative bacteria. The chain is 3-deoxy-manno-octulosonate cytidylyltransferase from Pseudoalteromonas translucida (strain TAC 125).